The chain runs to 82 residues: Progonadoliberin-3 (82 aa).

The first 23 residues, 1–23, serve as a signal peptide directing secretion; it reads MDLSSKTVVQVVMLALIAQVTFS. Glutamine 24 carries the post-translational modification Pyrrolidone carboxylic acid. At glycine 33 the chain carries Glycine amide.

The protein belongs to the GnRH family.

Its subcellular location is the secreted. Stimulates the secretion of gonadotropins. The chain is Progonadoliberin-3 (gnrh3) from Oncorhynchus masou (Cherry salmon).